The following is an 89-amino-acid chain: MEIILGFVALACGLIVGLGAIGASIGIGLMGGKFLESSARQPELINELQTKMFILAGLIDAAFLIGVAIALMFAFANPFVSTLLANMPK.

2 helical membrane-spanning segments follow: residues Ile3–Ala23 and Phe53–Phe73.

It belongs to the ATPase C chain family. F-type ATPases have 2 components, F(1) - the catalytic core - and F(0) - the membrane proton channel. F(1) has five subunits: alpha(3), beta(3), gamma(1), delta(1), epsilon(1). F(0) has three main subunits: a(1), b(2) and c(10-14). The alpha and beta chains form an alternating ring which encloses part of the gamma chain. F(1) is attached to F(0) by a central stalk formed by the gamma and epsilon chains, while a peripheral stalk is formed by the delta and b chains.

The protein resides in the cell inner membrane. Functionally, f(1)F(0) ATP synthase produces ATP from ADP in the presence of a proton or sodium gradient. F-type ATPases consist of two structural domains, F(1) containing the extramembraneous catalytic core and F(0) containing the membrane proton channel, linked together by a central stalk and a peripheral stalk. During catalysis, ATP synthesis in the catalytic domain of F(1) is coupled via a rotary mechanism of the central stalk subunits to proton translocation. Key component of the F(0) channel; it plays a direct role in translocation across the membrane. A homomeric c-ring of between 10-14 subunits forms the central stalk rotor element with the F(1) delta and epsilon subunits. In Verminephrobacter eiseniae (strain EF01-2), this protein is ATP synthase subunit c.